The chain runs to 457 residues: tRNA-2-methylthio-N(6)-dimethylallyladenosine synthase (457 aa).

The 118-residue stretch at 3 to 120 (KKVYVKTFGC…LPQMIDARRA (118 aa)) folds into the MTTase N-terminal domain. [4Fe-4S] cluster-binding residues include Cys-12, Cys-49, Cys-83, Cys-157, Cys-161, and Cys-164. One can recognise a Radical SAM core domain in the interval 143–377 (RVEGPSAFVS…QATIEENVAR (235 aa)). Residues 380 to 447 (QSMVGKVERI…PHSLRGELVL (68 aa)) enclose the TRAM domain.

It belongs to the methylthiotransferase family. MiaB subfamily. As to quaternary structure, monomer. It depends on [4Fe-4S] cluster as a cofactor.

The protein resides in the cytoplasm. It carries out the reaction N(6)-dimethylallyladenosine(37) in tRNA + (sulfur carrier)-SH + AH2 + 2 S-adenosyl-L-methionine = 2-methylsulfanyl-N(6)-dimethylallyladenosine(37) in tRNA + (sulfur carrier)-H + 5'-deoxyadenosine + L-methionine + A + S-adenosyl-L-homocysteine + 2 H(+). Functionally, catalyzes the methylthiolation of N6-(dimethylallyl)adenosine (i(6)A), leading to the formation of 2-methylthio-N6-(dimethylallyl)adenosine (ms(2)i(6)A) at position 37 in tRNAs that read codons beginning with uridine. The protein is tRNA-2-methylthio-N(6)-dimethylallyladenosine synthase of Burkholderia cenocepacia (strain HI2424).